A 142-amino-acid polypeptide reads, in one-letter code: uncharacterized protein (142 aa).

The protein belongs to the IIV-6 115R family.

This is an uncharacterized protein from Invertebrate iridescent virus 3 (IIV-3).